Consider the following 1140-residue polypeptide: MVGWVCIFLVVLTTATAGLTRNLYELKIECPHTVGLGQGYVTGSVEITPILLTQVADLKIESSCNFDLHVPATTTQKYNQVDWTKKSSTTESTNAGATTFEAKTKEINLKGTCNIPPTTFEAAYKSRKTVICYDLACNQTHCLPTVHLIAPVQTCMSVRSCMIGLLSSRIQVIYEKTYCVTGQLIEGLCFIPTHTIALTQPGHTYDTMTLPVTCFLVAKKLGTQLKLAVELEKLITGVSCTENSFQGYYICFIGKHSEPLFVPTMEDYRSAELFTRMVLNPRGEDHDPDQNGQGLMRIAGPVTAKVPSTETTETMQGIAFAGAPMYSSFSTLVRKADPEYVFSPGIIAESNHSVCDKKTVPLTWTGFLAVSGEIEKITGCTVFCTLAGPGASCEAYSETGIFNISSPTCLVNKVQKFRGSEQRINFMCQRVDQDVVVYCNGQKKVILTKTLVIGQCIYTFTSLFSLIPGVAHSLAVELCVPGLHGWATTALLITFCFGWLLIPAVTLIILKILRLLTFSCSHYSTESKFKVILERVKVEYQKTMGSMVCDICHHECETAKELETHKKSCPEGQCPYCMTITESTESALQAHFAICKLTNRFQENLKKSLKRPEVRKGCYRTLGVFRYKSRCYVGLVWGILLTTELIIWAASADTPLMESGWSDTAHGVGIIPMKTDLELDFALASSSSYSYRRKLVNPANQEETLPFHFQLDKQVVHAEIQNLGHWMDGTFNIKTAFHCYGECKKYAYPWQTAKCFFEKDYQYETSWGCNPPDCPGVGTGCTACGVYLDKLRSVGKAYKIVSLKYTRKVCIQLGTEQTCKHIDVNDCLVTPSVKVCMIGTISKLQPGDTLLFLGPLEQGGIILKQWCTTSCVFGDPGDIMSTTSGMRCPEHTGSFRKICGFATTPTCEYQGNTVSGFQRMMATRDSFQSFNVTEPHITSNRLEWIDPDSSIKDHINMVLNRDVSFQDLSDNPCKVDLHTQSIDGAWGSGVGFTLVCTVGLTECANFITSIKACDSAMCYGATVTNLLRGSNTVKVVGKGGHSGSLFKCCHDTDCTEEGLAASPPHLDRVTGYNQIDSDKVYDDGAPPCTIKCWFTKSGEWLLGILNGNWVVVAVLIVILILSILLFSFFCPVRSRKNKAN.

Residues 1 to 17 (MVGWVCIFLVVLTTATA) form the signal peptide. Residues 18–480 (GLTRNLYELK…AHSLAVELCV (463 aa)) lie on the Lumenal side of the membrane. Cystine bridges form between cysteine 30/cysteine 155, cysteine 64/cysteine 161, cysteine 113/cysteine 132, cysteine 137/cysteine 142, cysteine 179/cysteine 189, and cysteine 214/cysteine 251. N-linked (GlcNAc...) asparagine; by host glycosylation is present at asparagine 138. The N-linked (GlcNAc...) asparagine; by host glycan is linked to asparagine 351. Intrachain disulfides connect cysteine 380-cysteine 439, cysteine 384-cysteine 393, cysteine 409-cysteine 428, and cysteine 456-cysteine 479. A glycan (N-linked (GlcNAc...) asparagine; by host) is linked at asparagine 403. A helical membrane pass occupies residues 490-510 (ALLITFCFGWLLIPAVTLIIL). At 511–631 (KILRLLTFSC…LGVFRYKSRC (121 aa)) the chain is on the cytoplasmic side. Positions 520–537 (CSHYSTESKFKVILERVK) are binding to the ribonucleoprotein. 2 consecutive CCHC-type zinc fingers follow at residues 549–569 (CDIC…KKSC) and 574–595 (CPYC…FAIC). 3 binding to the ribonucleoprotein regions span residues 592 to 609 (FAIC…KKSL), 596 to 607 (KLTNRFQENLKK), and 615 to 629 (RKGC…RYKS). Residues 615 to 638 (RKGCYRTLGVFRYKSRCYVGLVWG) enclose the ITAM domain. Phosphotyrosine occurs at positions 619 and 632. Residues 619–622 (YRTL) carry the YxxL motif. A helical transmembrane segment spans residues 632–652 (YVGLVWGILLTTELIIWAASA). Topologically, residues 653–1108 (DTPLMESGWS…EWLLGILNGN (456 aa)) are lumenal. Disulfide bonds link cysteine 739/cysteine 774, cysteine 743/cysteine 781, cysteine 755/cysteine 888, cysteine 769/cysteine 899, cysteine 784/cysteine 907, cysteine 810/cysteine 819, cysteine 827/cysteine 836, and cysteine 867/cysteine 871. The fusion loop stretch occupies residues 761 to 781 (YQYETSWGCNPPDCPGVGTGC). Asparagine 931 carries N-linked (GlcNAc...) asparagine; by host glycosylation. 5 cysteine pairs are disulfide-bonded: cysteine 973–cysteine 1003, cysteine 996–cysteine 1048, cysteine 1013–cysteine 1018, cysteine 1049–cysteine 1054, and cysteine 1088–cysteine 1092. The chain crosses the membrane as a helical span at residues 1109-1129 (WVVVAVLIVILILSILLFSFF). A binding to the ribonucleoprotein region spans residues 1125–1140 (LFSFFCPVRSRKNKAN). Over 1130 to 1140 (CPVRSRKNKAN) the chain is Cytoplasmic.

The protein belongs to the hantavirus envelope glycoprotein family. As to quaternary structure, homodimer. Homotetramer; forms heterotetrameric Gn-Gc spikes in the pre-fusion conformation. Interacts (via C-terminus) with the nucleoprotein. Interacts with host TUFM; this interaction contributes to the virus-induced degradation of mitochondria by autophagy, which leads to degradation of host MAVS and inhibition of type I interferon (IFN) responses. Interacts with host MAP1LC3B; this interaction contributes to the virus-induced degradation of mitochondria by autophagy, which leads to degradation of host MAVS and inhibition of type I interferon (IFN) responses. In terms of assembly, homodimer. Homotetramer; forms heterotetrameric Gn-Gc spikes in the pre-fusion conformation. Homotrimer; forms homotrimer in the post-fusion conformation at acidic pH. Interacts (via C-terminus) with the nucleoprotein. Post-translationally, envelope polyprotein precursor is quickly cleaved in vivo just after synthesis, presumably by host signal peptidase.

Its subcellular location is the virion membrane. It is found in the host cell surface. It localises to the host Golgi apparatus membrane. The protein localises to the host endoplasmic reticulum membrane. The protein resides in the host mitochondrion. Forms homotetramers with glycoprotein C at the surface of the virion. Attaches the virion to host cell receptors including integrin ITGAV/ITGB3. This attachment induces virion internalization predominantly through clathrin-dependent endocytosis. Mediates the assembly and budding of infectious virus particles through its interaction with the nucleocapsid protein and the viral genome. May dysregulate normal immune and endothelial cell responses through an ITAM motif. Translocates to mitochondria, binds to host TUFM and recruits MAP1LC3B. These interactions induce mitochondrial autophagy and therefore destruction of host MAVS leading to inhibition of type I interferon (IFN) responses. Concomitant breakdown of glycoprotein N is apparently prevented by the nucleoprotein that may inhibit Gn-stimulated autophagosome-lysosome fusion. Interacts with the viral genomic RNA. Functionally, forms homotetramers with glycoprotein N at the surface of the virion. Attaches the virion to host cell receptors including integrin ITGAV/ITGB3. This attachment induces virion internalization predominantly through clathrin-dependent endocytosis. Class II fusion protein that promotes fusion of viral membrane with host endosomal membrane after endocytosis of the virion. This is Envelopment polyprotein (GP) from Sin Nombre orthohantavirus (SNV).